Here is a 375-residue protein sequence, read N- to C-terminus: Sulfite efflux pump SSU1 (375 aa).

The Cytoplasmic segment spans residues 1–25 (MPSGSGFHNIEEAGEKARKRDDWIA). A helical transmembrane segment spans residues 26–46 (ISNFHPGWFSVNMGTGITAIL). Residues 47 to 59 (LQNLPYQFPGLHY) are Extracellular-facing. Residues 60 to 80 (IAVILFILNVIIFFLFLTISI) traverse the membrane as a helical segment. Residues 81–101 (TRYCLWPDKFKAMLAHPAHSM) are Cytoplasmic-facing. The chain crosses the membrane as a helical span at residues 102–122 (LLGTFPMGFATIINCIVFICV). The Extracellular portion of the chain corresponds to 123–135 (PVWGEWASRFAWG). A helical membrane pass occupies residues 136-156 (LWWIDAAVSVAICYFVPFMLM). Residues 157–167 (TKHTSSLETMT) lie on the Cytoplasmic side of the membrane. Residues 168–188 (AAWLLPIVAPVVAAASGGVVA) form a helical membrane-spanning segment. Residues 189–200 (DSLQNDTHALIT) are Extracellular-facing. The N-linked (GlcNAc...) asparagine glycan is linked to asparagine 193. Residues 201 to 221 (ILVCYVMWGSAVPLAMVILVI) form a helical membrane-spanning segment. Residues 222–234 (YFQRLAIHKLVPR) are Cytoplasmic-facing. A helical membrane pass occupies residues 235-255 (AAIVSALLPIGPLGQGGFGLM). The Extracellular segment spans residues 256-277 (QLGVVAKRVFPRLDFLAPIAGD). The helical transmembrane segment at 278–298 (IFYVMGAFIAMIMWGFGLIWL) threads the bilayer. The Cytoplasmic segment spans residues 299–309 (WFALASFTRGK). The chain crosses the membrane as a helical span at residues 310–330 (FYFNIGWWAFTFPLGVFTTAT). Topologically, residues 331–343 (TQMGKEFNSPFFD) are extracellular. A helical membrane pass occupies residues 344–364 (ILGTFFSIVVTCMWVLVFALT). At 365-375 (VYKSCTKELFR) the chain is on the cytoplasmic side.

This sequence belongs to the tellurite-resistance/dicarboxylate transporter (TDT) family.

The protein localises to the cell membrane. Functionally, sulphite efflux pump required for the secretion of sulphite as a reducing agent. In the presence of sulphite, cystine in keratin is directly cleaved to cysteine and S-sulphocysteine, and thereby, reduced proteins become accessible to hydrolysis by a variety of secreted endo- and exoproteases. Excretion of sulphite mediated by an efflux pump also represents a detoxification pathway for dermatophytes during infection of the epidermal stratum corneum, hair and nails, which are rich in cysteine. The protein is Sulfite efflux pump SSU1 of Arthroderma benhamiae (strain ATCC MYA-4681 / CBS 112371) (Trichophyton mentagrophytes).